The sequence spans 512 residues: Probable cytosol aminopeptidase (512 aa).

Residues K284 and D289 each coordinate Mn(2+). K296 is a catalytic residue. Mn(2+) is bound by residues D307, D366, and E368. Residue R370 is part of the active site.

The protein belongs to the peptidase M17 family. Mn(2+) is required as a cofactor.

It localises to the cytoplasm. It catalyses the reaction Release of an N-terminal amino acid, Xaa-|-Yaa-, in which Xaa is preferably Leu, but may be other amino acids including Pro although not Arg or Lys, and Yaa may be Pro. Amino acid amides and methyl esters are also readily hydrolyzed, but rates on arylamides are exceedingly low.. The catalysed reaction is Release of an N-terminal amino acid, preferentially leucine, but not glutamic or aspartic acids.. Presumably involved in the processing and regular turnover of intracellular proteins. Catalyzes the removal of unsubstituted N-terminal amino acids from various peptides. The sequence is that of Probable cytosol aminopeptidase from Cupriavidus necator (strain ATCC 17699 / DSM 428 / KCTC 22496 / NCIMB 10442 / H16 / Stanier 337) (Ralstonia eutropha).